A 364-amino-acid chain; its full sequence is Leucine dehydrogenase (364 aa).

The active site involves lysine 80. 180-186 (GVGNVAY) lines the NAD(+) pocket.

The protein belongs to the Glu/Leu/Phe/Val dehydrogenases family.

It catalyses the reaction L-leucine + NAD(+) + H2O = 4-methyl-2-oxopentanoate + NH4(+) + NADH + H(+). It functions in the pathway amino-acid degradation; L-leucine degradation; 4-methyl-2-oxopentanoate from L-leucine (dehydrogenase route): step 1/1. In terms of biological role, catalyzes the reversible deamination of L-leucine to 4-methyl-2-oxopentanoate. This is Leucine dehydrogenase (yqiT) from Bacillus subtilis (strain 168).